Reading from the N-terminus, the 248-residue chain is 4-hydroxy-tetrahydrodipicolinate reductase (248 aa).

Residues 74–76 (GTT) and 99–102 (SANF) each bind NAD(+). The active-site Proton donor/acceptor is the histidine 134. Histidine 135 provides a ligand contact to (S)-2,3,4,5-tetrahydrodipicolinate. Catalysis depends on lysine 138, which acts as the Proton donor. 144-145 (GT) contacts (S)-2,3,4,5-tetrahydrodipicolinate.

Belongs to the DapB family.

The protein resides in the cytoplasm. It catalyses the reaction (S)-2,3,4,5-tetrahydrodipicolinate + NAD(+) + H2O = (2S,4S)-4-hydroxy-2,3,4,5-tetrahydrodipicolinate + NADH + H(+). The catalysed reaction is (S)-2,3,4,5-tetrahydrodipicolinate + NADP(+) + H2O = (2S,4S)-4-hydroxy-2,3,4,5-tetrahydrodipicolinate + NADPH + H(+). Its pathway is amino-acid biosynthesis; L-lysine biosynthesis via DAP pathway; (S)-tetrahydrodipicolinate from L-aspartate: step 4/4. Its function is as follows. Catalyzes the conversion of 4-hydroxy-tetrahydrodipicolinate (HTPA) to tetrahydrodipicolinate. This chain is 4-hydroxy-tetrahydrodipicolinate reductase, found in Chlorobium phaeobacteroides (strain DSM 266 / SMG 266 / 2430).